A 707-amino-acid polypeptide reads, in one-letter code: Trans-feruloyl-CoA synthase FCS1 (707 aa).

ATP is bound by residues H267 and 524 to 535 (ARAIGYPVVMKA). Positions 498–549 (KELLRPLGIAFPPSQFAANAEAAAAAARAIGYPVVMKAQAAALGHKSDAGGV) constitute an ATP-grasp domain.

In the N-terminal section; belongs to the acetate CoA ligase alpha subunit family. The protein in the C-terminal section; belongs to the acetate CoA ligase beta subunit family. As to quaternary structure, homodimer.

It carries out the reaction (E)-ferulate + ATP + CoA = (E)-feruloyl-CoA + ADP + phosphate. In terms of biological role, catalyzes the formation of feruloyl-CoA, ADP and phosphate from ferulate, CoA and ATP. This is Trans-feruloyl-CoA synthase FCS1 from Unknown prokaryotic organism.